The sequence spans 200 residues: dTTP/UTP pyrophosphatase (200 aa).

Residue D81 is the Proton acceptor of the active site.

This sequence belongs to the Maf family. YhdE subfamily. A divalent metal cation serves as cofactor.

Its subcellular location is the cytoplasm. It carries out the reaction dTTP + H2O = dTMP + diphosphate + H(+). It catalyses the reaction UTP + H2O = UMP + diphosphate + H(+). In terms of biological role, nucleoside triphosphate pyrophosphatase that hydrolyzes dTTP and UTP. May have a dual role in cell division arrest and in preventing the incorporation of modified nucleotides into cellular nucleic acids. This is dTTP/UTP pyrophosphatase from Cupriavidus metallidurans (strain ATCC 43123 / DSM 2839 / NBRC 102507 / CH34) (Ralstonia metallidurans).